We begin with the raw amino-acid sequence, 221 residues long: Thiopurine S-methyltransferase (221 aa).

Residues Trp-12, Leu-47, Glu-68, and Arg-125 each coordinate S-adenosyl-L-methionine.

It belongs to the class I-like SAM-binding methyltransferase superfamily. TPMT family.

It is found in the cytoplasm. The enzyme catalyses S-adenosyl-L-methionine + a thiopurine = S-adenosyl-L-homocysteine + a thiopurine S-methylether.. This Legionella pneumophila (strain Paris) protein is Thiopurine S-methyltransferase.